Here is a 766-residue protein sequence, read N- to C-terminus: BMP/retinoic acid-inducible neural-specific protein 3 (766 aa).

A signal peptide spans 1-33; sequence MIWRSRAGAELFSLMALWEWIALSLHCWVLAVA. The 191-residue stretch at 74 to 264 folds into the MACPF domain; that stretch reads RYKIYREFGR…FVQAALSYIA (191 aa). N-linked (GlcNAc...) asparagine glycans are attached at residues N168, N337, N456, N562, N609, and N641.

The protein belongs to the BRINP family. Strongly expressed in oral keratinocytes compared to the weak expression in tongue squamous cell carcinoma (SCC). Expressed in endothelial and aortic smooth muscle cells. Overexpressed in gonadotropinomas compared to normal pituitarie tissues.

The protein resides in the secreted. It is found in the mitochondrion. Functionally, inhibits neuronal cell proliferation by negative regulation of the cell cycle transition. Promotes pituitary gonadotrope cell proliferation, migration and invasion, when overexpressed. May play a role in cell pituitary tumor development. The chain is BMP/retinoic acid-inducible neural-specific protein 3 (BRINP3) from Homo sapiens (Human).